A 1368-amino-acid polypeptide reads, in one-letter code: MQYSFTEKKRIRKSFAKRPIVHQVPFLLATQLESFSTFLQADVPGTQRKPEGLQAAFTSVFPIVSHNGFARLEFVSYALSSPAFNIKECQQRGLTYCSALRAKVRLVILDKESPNKPVVKEVKEQEVYMGEIPLMTPTGSFVINGTERVIVSQLHRSPGVFFEHDKGKTHSSGKLLFSARIIPYRGSWLDFEFDPKDILYFRVDRRRKMPVTILLKAIGLTPEQILANFFVFDNFTLMDEGAQLEFVPERLRGEVARFDITDRDGKVIVQKDKRINAKHIRDLEAAKTKFISVPEDYLLGRVLAKNVVDGDTGEVIASANDEVTESVLEKLREAGIKEIQTLYTNDLDQGPYISSTLRVDETTDKTAARIAIYRMMRPGEPPTEEAVEALFNRLFYSEEAYDLSKVGRMKFNRRVGRDEITGPMTLQDDDILATIKILVELRNGKGEVDDIDHLGNRRVRCVGELAENQFRAGLVRVERAVKERLGQAESENLMPHDLINSKPISSAIREFFGSSQLSQFMDQTNPLSEITHKRRVSALGPGGLTRERAGFEVRDVHPTHYGRVCPIETPEGPNIGLINSLALYAHLNEYGFLETPYRKVVDSKVTDQIDYLSAIEEGRYMIAQANAAIDENGQLVDELVSSREAGETMMVTPDRIQYMDVAPSQIVSVAASLIPFLEHDDANRALMGSNMQRQAVPCLRPEKPVVGTGIERTCAVDSGTTVQAFRGGVVDYVDAGRIVIRVNDDEAVAGEVGVDIYNLIKYTRSNQNTNINQRPIVKMGDKVSRGDVLADGASTDLGELALGQNMLIAFMPWNGYNFEDSILISEKVVADDRYTSIHIEELNVVARDTKLGPEEITRDISNLAEVQLGRLDESGIVYIGAEVEAGDVLVGKVTPKGETQLTPEEKLLRAIFGEKASDVKDTSLRVPSGMSGTVIDVQVFTREGIQRDKRAQQIIDDELKRYRLDLNDQLRIVEGDAFQRLARMLVGKVANGGPKKLAKGTKIDQAYLEDLDHYHWFDIRLADDEAAAQLEAIKNSIEEKRHQFDLAFEEKRKKLTQGDELPPGVLKMVKVYLAVKRRLQPGDKMAGRHGNKGVVSKIVPIEDMPYMADGRPADVVLNPLGVPSRMNVGQVLEVHLGWAAKGLGWRIGEMLQRQAKIEEMRSFLTKIYNDSGRKEDLESFTDDEILELAKNLREGVPFATPVFDGATEEEMGKMLDLAFPDDIAEQLGMNPSKNQVRLYDGRTGEMFERRVTLGYMHYLKLHHLVDDKMHARSTGPYSLVTQQPLGGKAQFGGQRFGEMEVWALEAYGASYVLQEMLTVKSDDVNGRTKVYENLVKGDHVIDAGMPESFNVLVKEIRSLGIDIDLDRN.

Belongs to the RNA polymerase beta chain family. The RNAP catalytic core consists of 2 alpha, 1 beta, 1 beta' and 1 omega subunit. When a sigma factor is associated with the core the holoenzyme is formed, which can initiate transcription.

The enzyme catalyses RNA(n) + a ribonucleoside 5'-triphosphate = RNA(n+1) + diphosphate. Functionally, DNA-dependent RNA polymerase catalyzes the transcription of DNA into RNA using the four ribonucleoside triphosphates as substrates. The sequence is that of DNA-directed RNA polymerase subunit beta from Burkholderia ambifaria (strain ATCC BAA-244 / DSM 16087 / CCUG 44356 / LMG 19182 / AMMD) (Burkholderia cepacia (strain AMMD)).